Consider the following 432-residue polypeptide: Short/branched chain specific acyl-CoA dehydrogenase, mitochondrial (432 aa).

The transit peptide at 1-33 directs the protein to the mitochondrion; sequence MERATVRLLRGGALLRRNFPSCLSSWKTPPHAL. N6-acetyllysine; alternate is present on K70. At K70 the chain carries N6-succinyllysine; alternate. Residues 174-183 and 207-209 each bind FAD; these read ICISETGAGS and WIS. S183 lines the substrate pocket. Residue S183 is modified to Phosphoserine. Residues Y229 and Y283 each coordinate substrate. K284 bears the N6-acetyllysine; alternate mark. At K284 the chain carries N6-succinyllysine; alternate. 291-294 contributes to the substrate binding site; sequence NEGR. FAD-binding positions include R319, Q330, and 387–391; that span reads EWMGG. The active-site Proton acceptor is the E414. Residue 416-418 participates in FAD binding; it reads TSN. Position 426 is an N6-acetyllysine (K426).

Belongs to the acyl-CoA dehydrogenase family. As to quaternary structure, homotetramer. The cofactor is FAD.

The protein localises to the mitochondrion matrix. It carries out the reaction 2-methylbutanoyl-CoA + oxidized [electron-transfer flavoprotein] + H(+) = (2E)-2-methylbut-2-enoyl-CoA + reduced [electron-transfer flavoprotein]. The catalysed reaction is (2S)-2-methylbutanoyl-CoA + oxidized [electron-transfer flavoprotein] + H(+) = (2E)-2-methylbut-2-enoyl-CoA + reduced [electron-transfer flavoprotein]. The enzyme catalyses (2R)-2-methylbutanoyl-CoA + oxidized [electron-transfer flavoprotein] + H(+) = ethylacryloyl-CoA + reduced [electron-transfer flavoprotein]. It catalyses the reaction butanoyl-CoA + oxidized [electron-transfer flavoprotein] + H(+) = (2E)-butenoyl-CoA + reduced [electron-transfer flavoprotein]. It carries out the reaction 2-methylpropanoyl-CoA + oxidized [electron-transfer flavoprotein] + H(+) = 2-methylpropenoyl-CoA + reduced [electron-transfer flavoprotein]. The catalysed reaction is hexanoyl-CoA + oxidized [electron-transfer flavoprotein] + H(+) = (2E)-hexenoyl-CoA + reduced [electron-transfer flavoprotein]. The enzyme catalyses valproyl-CoA + oxidized [electron-transfer flavoprotein] + H(+) = (2E)-2-propylpent-2-enoyl-CoA + reduced [electron-transfer flavoprotein]. Its pathway is lipid metabolism; mitochondrial fatty acid beta-oxidation. The protein operates within amino-acid degradation; L-isoleucine degradation. Functionally, short and branched chain specific acyl-CoA dehydrogenase that catalyzes the removal of one hydrogen from C-2 and C-3 of the fatty acyl-CoA thioester, resulting in the formation of trans-2-enoyl-CoA. Among the different mitochondrial acyl-CoA dehydrogenases, acts specifically on short and branched chain acyl-CoA derivatives such as (S)-2-methylbutyryl-CoA as well as short straight chain acyl-CoAs such as butyryl-CoA. Plays an important role in the metabolism of L-isoleucine by catalyzing the dehydrogenation of 2-methylbutyryl-CoA, one of the steps of the L-isoleucine catabolic pathway. Can also act on valproyl-CoA, a metabolite of the valproic acid drug. The protein is Short/branched chain specific acyl-CoA dehydrogenase, mitochondrial (ACADSB) of Bos taurus (Bovine).